An 87-amino-acid polypeptide reads, in one-letter code: Acyl-CoA-binding protein (87 aa).

Serine 2 is subject to N-acetylserine. One can recognise an ACB domain in the interval 2 to 87 (SQADFDKAAE…VEELKKKYGI (86 aa)). Lysine 8 is modified (N6-acetyllysine; alternate). At lysine 8 the chain carries N6-succinyllysine; alternate. Residue lysine 14 coordinates an acyl-CoA. The residue at position 17 (lysine 17) is an N6-succinyllysine. Position 29 is a phosphotyrosine (tyrosine 29). Residues 29–33 (YSHFK), lysine 51, lysine 55, and tyrosine 74 contribute to the an acyl-CoA site. The residue at position 51 (lysine 51) is an N6-acetyllysine. Lysine 55 carries the post-translational modification N6-acetyllysine; alternate. Lysine 55 bears the N6-succinyllysine; alternate mark. Lysine 55 carries the N6-(2-hydroxyisobutyryl)lysine; alternate modification. Lysine 55 is subject to N6-malonyllysine; alternate. Lysine 77 bears the N6-acetyllysine; alternate mark. Lysine 77 carries the N6-succinyllysine; alternate modification.

The protein belongs to the ACBP family. Monomer.

The protein localises to the endoplasmic reticulum. It is found in the golgi apparatus. Binds medium- and long-chain acyl-CoA esters with very high affinity and may function as an intracellular carrier of acyl-CoA esters. It is also able to displace diazepam from the benzodiazepine (BZD) recognition site located on the GABA type A receptor. It is therefore possible that this protein also acts as a neuropeptide to modulate the action of the GABA receptor. This chain is Acyl-CoA-binding protein (Dbi), found in Rattus norvegicus (Rat).